Here is a 293-residue protein sequence, read N- to C-terminus: Bisanhydrobacterioruberin hydratase (293 aa).

The next 7 helical transmembrane spans lie at 36–56, 66–86, 89–109, 134–154, 171–191, 199–219, and 254–274; these read IAVV…EGLL, FVLF…FPLV, RAGL…LVGV, FGLP…VLLL, ATVM…GFWI, GVPW…VLLF, and LFYT…GLLW.

This sequence belongs to the BABR hydratase family.

The protein localises to the membrane. It carries out the reaction bacterioruberin = bisanhydrobacterioruberin + 2 H2O. The protein operates within carotenoid biosynthesis. In terms of biological role, involved in the biosynthesis of the acyclic C50 carotenoid bacterioruberin (BR). Catalyzes the reaction that introduces hydroxyl groups to C3'' and C3''' of bisanhydrobacterioruberin (BABR) to generate BR. This chain is Bisanhydrobacterioruberin hydratase, found in Haloarcula japonica (strain ATCC 49778 / DSM 6131 / JCM 7785 / NBRC 101032 / NCIMB 13157 / TR-1).